The following is a 373-amino-acid chain: Chaperone protein DnaJ (373 aa).

A J domain is found at 5-70 (DYYEVLGVNR…QKRAAYDQYG (66 aa)). The CR-type zinc-finger motif lies at 133-211 (GTETKIRIPV…CHGGGRVKQH (79 aa)). Zn(2+) contacts are provided by cysteine 146, cysteine 149, cysteine 163, cysteine 166, cysteine 185, cysteine 188, cysteine 199, and cysteine 202. 4 CXXCXGXG motif repeats span residues 146–153 (CETCHGSG), 163–170 (CSTCGGHG), 185–192 (CPKCHGSG), and 199–206 (CPTCHGGG). Positions 346 to 373 (LEDINQQDSGKHSPREKSWMTKVKDFFQ) are disordered. The span at 354 to 373 (SGKHSPREKSWMTKVKDFFQ) shows a compositional bias: basic and acidic residues.

Belongs to the DnaJ family. Homodimer. Zn(2+) is required as a cofactor.

It localises to the cytoplasm. Functionally, participates actively in the response to hyperosmotic and heat shock by preventing the aggregation of stress-denatured proteins and by disaggregating proteins, also in an autonomous, DnaK-independent fashion. Unfolded proteins bind initially to DnaJ; upon interaction with the DnaJ-bound protein, DnaK hydrolyzes its bound ATP, resulting in the formation of a stable complex. GrpE releases ADP from DnaK; ATP binding to DnaK triggers the release of the substrate protein, thus completing the reaction cycle. Several rounds of ATP-dependent interactions between DnaJ, DnaK and GrpE are required for fully efficient folding. Also involved, together with DnaK and GrpE, in the DNA replication of plasmids through activation of initiation proteins. The chain is Chaperone protein DnaJ from Methylobacillus flagellatus (strain ATCC 51484 / DSM 6875 / VKM B-1610 / KT).